The following is a 257-amino-acid chain: Alcohol dehydrogenase 1 (257 aa).

Residue 9 to 33 (VFVGGLGFIAYEACKYLMNNDLASL) coordinates NAD(+). Serine 137 provides a ligand contact to substrate. The Proton acceptor role is filled by tyrosine 150.

Belongs to the short-chain dehydrogenases/reductases (SDR) family. Homodimer.

The enzyme catalyses a primary alcohol + NAD(+) = an aldehyde + NADH + H(+). The catalysed reaction is a secondary alcohol + NAD(+) = a ketone + NADH + H(+). This chain is Alcohol dehydrogenase 1 (ADH1), found in Ceratitis capitata (Mediterranean fruit fly).